The chain runs to 436 residues: GTPase Der (436 aa).

EngA-type G domains are found at residues 4–167 (PTVA…PNEI) and 175–351 (IKFS…HAQN). Residues 10–17 (GRPNVGKS), 57–61 (DTGGI), 119–122 (NKVD), 181–188 (GRPNVGKS), 229–233 (DTAGM), and 294–297 (NKWD) each bind GTP. The 85-residue stretch at 352–436 (LRISSSVLND…PVHLIARKRK (85 aa)) folds into the KH-like domain.

It belongs to the TRAFAC class TrmE-Era-EngA-EngB-Septin-like GTPase superfamily. EngA (Der) GTPase family. In terms of assembly, associates with the 50S ribosomal subunit.

Functionally, GTPase that plays an essential role in the late steps of ribosome biogenesis. The sequence is that of GTPase Der from Lactococcus lactis subsp. lactis (strain IL1403) (Streptococcus lactis).